Here is a 228-residue protein sequence, read N- to C-terminus: UPF0758 protein str1465 (228 aa).

Residues 103 to 225 (QIMSSQQVAR…YYSFREERED (123 aa)) enclose the MPN domain. Zn(2+) contacts are provided by H174, H176, and D187. The JAMM motif motif lies at 174-187 (HNHPSGEAYPSRND).

This sequence belongs to the UPF0758 family.

The polypeptide is UPF0758 protein str1465 (Streptococcus thermophilus (strain CNRZ 1066)).